A 102-amino-acid polypeptide reads, in one-letter code: Putative septation protein SpoVG 1 (102 aa).

The protein belongs to the SpoVG family.

Its function is as follows. Could be involved in septation. The chain is Putative septation protein SpoVG 1 from Listeria innocua serovar 6a (strain ATCC BAA-680 / CLIP 11262).